A 435-amino-acid chain; its full sequence is Galactose/lactose metabolism regulatory protein GAL80 (435 aa).

Met-1 carries the post-translational modification N-acetylmethionine.

It to K.lactis GAL80. As to quaternary structure, monomer.

In terms of biological role, this protein is a negative regulator for the gene expression of the lactose/galactose metabolic genes. It binds to GAL4 and so blocks transcriptional activation by it, in the absence of an inducing sugar. The polypeptide is Galactose/lactose metabolism regulatory protein GAL80 (GAL80) (Saccharomyces cerevisiae (strain ATCC 204508 / S288c) (Baker's yeast)).